Consider the following 339-residue polypeptide: NADH-quinone oxidoreductase subunit H (339 aa).

The next 9 membrane-spanning stretches (helical) occupy residues 9–29 (IFPLIIIALKVVAITIPLILC), 50–70 (PNVVGPFGLLQPIADAVKLLF), 82–102 (ILFVLAPMITFILSLIGWAVI), 115–135 (VGVLYILAISSLSVYGIIIAG), 161–181 (MGLVIITVLLTTGTLNLSQIV), 187–207 (MPWWIDLMLMPMGVVFFISVL), 235–255 (MGFALFFLGEYANMILVSAMT), 275–295 (IPGFFWFVFKVGFLLFCFLWI), and 311–331 (GWKVFLPLTLFWVVLVSSVLI).

This sequence belongs to the complex I subunit 1 family. As to quaternary structure, NDH-1 is composed of 14 different subunits. Subunits NuoA, H, J, K, L, M, N constitute the membrane sector of the complex.

It localises to the cell inner membrane. It carries out the reaction a quinone + NADH + 5 H(+)(in) = a quinol + NAD(+) + 4 H(+)(out). Its function is as follows. NDH-1 shuttles electrons from NADH, via FMN and iron-sulfur (Fe-S) centers, to quinones in the respiratory chain. The immediate electron acceptor for the enzyme in this species is believed to be ubiquinone. Couples the redox reaction to proton translocation (for every two electrons transferred, four hydrogen ions are translocated across the cytoplasmic membrane), and thus conserves the redox energy in a proton gradient. This subunit may bind ubiquinone. The sequence is that of NADH-quinone oxidoreductase subunit H from Rickettsia bellii (strain RML369-C).